The primary structure comprises 396 residues: Large ribosomal subunit protein uL24m (396 aa).

Residues 374–396 are disordered; the sequence is QLSLGGGQEDAATTTSPEQPKVV. The segment covering 384 to 396 has biased composition (polar residues); it reads AATTTSPEQPKVV.

Belongs to the universal ribosomal protein uL24 family. As to quaternary structure, component of the mitochondrial large ribosomal subunit (mt-LSU). Mature N.crassa 74S mitochondrial ribosomes consist of a small (37S) and a large (54S) subunit. The 37S small subunit contains a 16S ribosomal RNA (16S mt-rRNA) and 32 different proteins. The 54S large subunit contains a 23S rRNA (23S mt-rRNA) and 42 different proteins. uL24m forms the wall of the exit tunnel.

Its subcellular location is the mitochondrion. In terms of biological role, component of the mitochondrial ribosome (mitoribosome), a dedicated translation machinery responsible for the synthesis of mitochondrial genome-encoded proteins, including at least some of the essential transmembrane subunits of the mitochondrial respiratory chain. The mitoribosomes are attached to the mitochondrial inner membrane and translation products are cotranslationally integrated into the membrane. The chain is Large ribosomal subunit protein uL24m (mrpl40) from Neurospora crassa (strain ATCC 24698 / 74-OR23-1A / CBS 708.71 / DSM 1257 / FGSC 987).